Consider the following 153-residue polypeptide: Virion assembly protein OPG100 (153 aa).

This sequence belongs to the orthopoxvirus OPG100 family. In terms of assembly, homodimer. Part of a complex composed of the kinase OPG054, OPG092, OPG114, OPG115, OPG142 and OPG157. Interacts with OPG175.

Its subcellular location is the virion. It localises to the host cytoplasm. In terms of biological role, late protein which is a part of a large complex required for early virion morphogenesis. This complex participates in the formation of virosomes and the incorporation of virosomal contents into nascent immature virions. Plays a role in DNA packaging during immature virions (IV) formation. The protein is Virion assembly protein OPG100 (OPG100) of Vaccinia virus (strain Western Reserve) (VACV).